The chain runs to 283 residues: Type III pantothenate kinase (283 aa).

9–16 (DIGNTRLK) is a binding site for ATP. Substrate contacts are provided by residues tyrosine 116 and 123–126 (GVDR). Aspartate 125 (proton acceptor) is an active-site residue. Threonine 149 contributes to the ATP binding site. Threonine 211 is a binding site for substrate.

Belongs to the type III pantothenate kinase family. Homodimer. It depends on NH4(+) as a cofactor. The cofactor is K(+).

It is found in the cytoplasm. The catalysed reaction is (R)-pantothenate + ATP = (R)-4'-phosphopantothenate + ADP + H(+). Its pathway is cofactor biosynthesis; coenzyme A biosynthesis; CoA from (R)-pantothenate: step 1/5. In terms of biological role, catalyzes the phosphorylation of pantothenate (Pan), the first step in CoA biosynthesis. The chain is Type III pantothenate kinase from Cupriavidus taiwanensis (strain DSM 17343 / BCRC 17206 / CCUG 44338 / CIP 107171 / LMG 19424 / R1) (Ralstonia taiwanensis (strain LMG 19424)).